The chain runs to 75 residues: Large ribosomal subunit protein bL28c (75 aa).

This sequence belongs to the bacterial ribosomal protein bL28 family.

The protein localises to the plastid. Its subcellular location is the chloroplast. The chain is Large ribosomal subunit protein bL28c from Cyanidioschyzon merolae (strain NIES-3377 / 10D) (Unicellular red alga).